Reading from the N-terminus, the 1265-residue chain is DNA-directed RNA polymerase subunit beta'' (1265 aa).

The Zn(2+) site is built by cysteine 223, cysteine 297, cysteine 304, and cysteine 307.

The protein belongs to the RNA polymerase beta' chain family. RpoC2 subfamily. As to quaternary structure, in plastids the minimal PEP RNA polymerase catalytic core is composed of four subunits: alpha, beta, beta', and beta''. When a (nuclear-encoded) sigma factor is associated with the core the holoenzyme is formed, which can initiate transcription. The cofactor is Zn(2+).

The protein resides in the plastid. It is found in the cyanelle. The enzyme catalyses RNA(n) + a ribonucleoside 5'-triphosphate = RNA(n+1) + diphosphate. Functionally, DNA-dependent RNA polymerase catalyzes the transcription of DNA into RNA using the four ribonucleoside triphosphates as substrates. The protein is DNA-directed RNA polymerase subunit beta'' of Cyanophora paradoxa.